Here is a 567-residue protein sequence, read N- to C-terminus: Thiol:disulfide interchange protein DsbD (567 aa).

The first 19 residues, methionine 1 to alanine 19, serve as a signal peptide directing secretion. Intrachain disulfides connect cysteine 122/cysteine 128 and cysteine 185/cysteine 307. Helical transmembrane passes span leucine 166–valine 186, leucine 210–valine 230, tyrosine 246–phenylalanine 266, isoleucine 299–isoleucine 319, tryptophan 326–valine 346, tryptophan 360–leucine 380, alanine 387–threonine 407, and isoleucine 418–alanine 438. Residues glutamine 435–proline 567 enclose the Thioredoxin domain. A disulfide bond links cysteine 482 and cysteine 485.

It belongs to the thioredoxin family. DsbD subfamily.

Its subcellular location is the cell inner membrane. The catalysed reaction is [protein]-dithiol + NAD(+) = [protein]-disulfide + NADH + H(+). It catalyses the reaction [protein]-dithiol + NADP(+) = [protein]-disulfide + NADPH + H(+). Its function is as follows. Required to facilitate the formation of correct disulfide bonds in some periplasmic proteins and for the assembly of the periplasmic c-type cytochromes. Acts by transferring electrons from cytoplasmic thioredoxin to the periplasm. This transfer involves a cascade of disulfide bond formation and reduction steps. In Salmonella choleraesuis (strain SC-B67), this protein is Thiol:disulfide interchange protein DsbD.